We begin with the raw amino-acid sequence, 226 residues long: MVKSFFVTGTDTDVGKTLVARTLLLEFAAHGLRCAGYKPISAGCARTPDGLRNLDAVLLQEAASLPLPYDLVNPYAYEPPIAPHIAASEARDAITLKGLSDGLRQIEQAGAELVVVEGAGGWFLPLDRKHLLSDWVKQENMPVIMVVGAKLGCLNHALLTFAAIRNNNLPVAGWVINRLHGSMSHYQENLDTLRGLLPAPFLGEIPFVNNPLEADLRGRLDISPLL.

Position 13 to 18 (13 to 18) interacts with ATP; that stretch reads DVGKTL. Thr17 contacts Mg(2+). Lys38 is a catalytic residue. ATP-binding positions include Asp55, 117–120, 177–178, 206–208, and Glu213; these read EGAG, NR, and PFV. 2 residues coordinate Mg(2+): Asp55 and Glu117.

This sequence belongs to the dethiobiotin synthetase family. In terms of assembly, homodimer. Mg(2+) is required as a cofactor.

It localises to the cytoplasm. It catalyses the reaction (7R,8S)-7,8-diammoniononanoate + CO2 + ATP = (4R,5S)-dethiobiotin + ADP + phosphate + 3 H(+). It participates in cofactor biosynthesis; biotin biosynthesis; biotin from 7,8-diaminononanoate: step 1/2. Catalyzes a mechanistically unusual reaction, the ATP-dependent insertion of CO2 between the N7 and N8 nitrogen atoms of 7,8-diaminopelargonic acid (DAPA, also called 7,8-diammoniononanoate) to form a ureido ring. This chain is ATP-dependent dethiobiotin synthetase BioD, found in Aeromonas hydrophila subsp. hydrophila (strain ATCC 7966 / DSM 30187 / BCRC 13018 / CCUG 14551 / JCM 1027 / KCTC 2358 / NCIMB 9240 / NCTC 8049).